The primary structure comprises 450 residues: Phosphoglucosamine mutase (450 aa).

The active-site Phosphoserine intermediate is the Ser-101. Mg(2+) contacts are provided by Ser-101, Asp-240, Asp-242, and Asp-244. Ser-101 is subject to Phosphoserine.

It belongs to the phosphohexose mutase family. The cofactor is Mg(2+). Post-translationally, activated by phosphorylation.

It carries out the reaction alpha-D-glucosamine 1-phosphate = D-glucosamine 6-phosphate. Catalyzes the conversion of glucosamine-6-phosphate to glucosamine-1-phosphate. In Streptococcus pneumoniae serotype 19F (strain G54), this protein is Phosphoglucosamine mutase.